The following is a 451-amino-acid chain: Uronate isomerase (451 aa).

The protein belongs to the metallo-dependent hydrolases superfamily. Uronate isomerase family. As to quaternary structure, homotrimer.

It carries out the reaction D-glucuronate = D-fructuronate. The enzyme catalyses aldehydo-D-galacturonate = keto-D-tagaturonate. It functions in the pathway carbohydrate metabolism; pentose and glucuronate interconversion. The protein is Uronate isomerase of Thermotoga maritima (strain ATCC 43589 / DSM 3109 / JCM 10099 / NBRC 100826 / MSB8).